We begin with the raw amino-acid sequence, 265 residues long: Imidazole glycerol phosphate synthase subunit HisF (265 aa).

Residues D17 and D136 contribute to the active site.

Belongs to the HisA/HisF family. Heterodimer of HisH and HisF.

The protein localises to the cytoplasm. It carries out the reaction 5-[(5-phospho-1-deoxy-D-ribulos-1-ylimino)methylamino]-1-(5-phospho-beta-D-ribosyl)imidazole-4-carboxamide + L-glutamine = D-erythro-1-(imidazol-4-yl)glycerol 3-phosphate + 5-amino-1-(5-phospho-beta-D-ribosyl)imidazole-4-carboxamide + L-glutamate + H(+). Its pathway is amino-acid biosynthesis; L-histidine biosynthesis; L-histidine from 5-phospho-alpha-D-ribose 1-diphosphate: step 5/9. Functionally, IGPS catalyzes the conversion of PRFAR and glutamine to IGP, AICAR and glutamate. The HisF subunit catalyzes the cyclization activity that produces IGP and AICAR from PRFAR using the ammonia provided by the HisH subunit. This chain is Imidazole glycerol phosphate synthase subunit HisF, found in Mycobacterium avium (strain 104).